The primary structure comprises 476 residues: Light-independent protochlorophyllide reductase subunit N (476 aa).

[4Fe-4S] cluster contacts are provided by Cys31, Cys56, and Cys116.

Belongs to the BchN/ChlN family. Protochlorophyllide reductase is composed of three subunits; ChlL, ChlN and ChlB. Forms a heterotetramer of two ChlB and two ChlN subunits. [4Fe-4S] cluster serves as cofactor.

Its subcellular location is the plastid. It localises to the chloroplast. The enzyme catalyses chlorophyllide a + oxidized 2[4Fe-4S]-[ferredoxin] + 2 ADP + 2 phosphate = protochlorophyllide a + reduced 2[4Fe-4S]-[ferredoxin] + 2 ATP + 2 H2O. Its pathway is porphyrin-containing compound metabolism; chlorophyll biosynthesis (light-independent). In terms of biological role, component of the dark-operative protochlorophyllide reductase (DPOR) that uses Mg-ATP and reduced ferredoxin to reduce ring D of protochlorophyllide (Pchlide) to form chlorophyllide a (Chlide). This reaction is light-independent. The NB-protein (ChlN-ChlB) is the catalytic component of the complex. The protein is Light-independent protochlorophyllide reductase subunit N of Staurastrum punctulatum (Green alga).